The primary structure comprises 286 residues: Phosphate import ATP-binding protein PstB (286 aa).

The 242-residue stretch at 40–281 (VVARDFSIYY…PKDSMTEDYI (242 aa)) folds into the ABC transporter domain. Position 72 to 79 (72 to 79 (GPSGCGKS)) interacts with ATP.

The protein belongs to the ABC transporter superfamily. Phosphate importer (TC 3.A.1.7) family. The complex is composed of two ATP-binding proteins (PstB), two transmembrane proteins (PstC and PstA) and a solute-binding protein (PstS).

It localises to the cell inner membrane. The enzyme catalyses phosphate(out) + ATP + H2O = ADP + 2 phosphate(in) + H(+). Its function is as follows. Part of the ABC transporter complex PstSACB involved in phosphate import. Responsible for energy coupling to the transport system. The polypeptide is Phosphate import ATP-binding protein PstB (Chlorobaculum tepidum (strain ATCC 49652 / DSM 12025 / NBRC 103806 / TLS) (Chlorobium tepidum)).